The sequence spans 132 residues: UPF0212 protein PYRAB08340 (132 aa).

The protein belongs to the UPF0212 family.

This is UPF0212 protein PYRAB08340 from Pyrococcus abyssi (strain GE5 / Orsay).